Reading from the N-terminus, the 238-residue chain is Fatty acid metabolism regulator protein (238 aa).

In terms of domain architecture, HTH gntR-type spans Lys-6–Phe-74. The segment at residues Glu-34–Gln-53 is a DNA-binding region (H-T-H motif).

Homodimer.

It localises to the cytoplasm. Its function is as follows. Multifunctional regulator of fatty acid metabolism. This chain is Fatty acid metabolism regulator protein, found in Shewanella baltica (strain OS185).